We begin with the raw amino-acid sequence, 291 residues long: Potassium-transporting ATPase subunit beta (291 aa).

The Cytoplasmic segment spans residues 1 to 36; it reads MAALQEKKTCGQRMEEFQRYCWNPDTGQMLGRTLSR. Residues 37 to 57 traverse the membrane as a helical; Signal-anchor for type II membrane protein segment; the sequence is WVWISLYYVAFYVVMTGLFAL. The Extracellular segment spans residues 58–291; the sequence is CLYVLMQTVD…KVEFKLKIEK (234 aa). Residues Asn-99, Asn-103, Asn-130, Asn-146, and Asn-161 are each glycosylated (N-linked (GlcNAc...) asparagine). Cys-131 and Cys-152 form a disulfide bridge. A disulfide bridge connects residues Cys-162 and Cys-178. N-linked (GlcNAc...) asparagine glycans are attached at residues Asn-193 and Asn-222. The interval 194–291 is immunoglobulin-like; it reads GSAPRVDCAF…KVEFKLKIEK (98 aa). Cys-201 and Cys-263 are disulfide-bonded.

Belongs to the X(+)/potassium ATPases subunit beta family. As to quaternary structure, the ATPase pump is composed of two subunits: alpha (catalytic) and beta (regulatory). Interacts with alpha subunit ATP12A; this interaction is required for the formation of a functionally active pump and targeting at the plasma membrane. Interacts (via N-terminus) with alpha subunit ATP4A (via the P-domain). In terms of processing, N-glycosylation is necessary for assembly and functional expression of the pump at the plasma membrane.

It localises to the apical cell membrane. The protein resides in the cell membrane. The beta subunit of the gastric H(+)/K(+) ATPase pump which transports H(+) ions in exchange for K(+) ions across the apical membrane of parietal cells. Plays a structural and regulatory role in the assembly and membrane targeting of a functionally active pump. Within a transport cycle, the transfer of a H(+) ion across the membrane is coupled to ATP hydrolysis and is associated with a transient phosphorylation of the alpha subunit that shifts the pump conformation from inward-facing (E1) to outward-facing state (E2). Interacts with the phosphorylation domain of the alpha subunit and functions as a ratchet, stabilizing the lumenal-open E2 conformation and preventing the reverse reaction of the transport cycle. In Homo sapiens (Human), this protein is Potassium-transporting ATPase subunit beta.